Consider the following 450-residue polypeptide: UPF0236 protein in vanSb 3'region (450 aa).

Belongs to the UPF0236 family.

The protein is UPF0236 protein in vanSb 3'region of Streptococcus gallolyticus (Streptococcus bovis biotype I).